A 508-amino-acid chain; its full sequence is Proline--tRNA ligase 2 (508 aa).

The protein belongs to the class-II aminoacyl-tRNA synthetase family. ProS type 3 subfamily. As to quaternary structure, homodimer.

It is found in the cytoplasm. It catalyses the reaction tRNA(Pro) + L-proline + ATP = L-prolyl-tRNA(Pro) + AMP + diphosphate. Catalyzes the attachment of proline to tRNA(Pro) in a two-step reaction: proline is first activated by ATP to form Pro-AMP and then transferred to the acceptor end of tRNA(Pro). The polypeptide is Proline--tRNA ligase 2 (Bacillus anthracis).